Consider the following 612-residue polypeptide: Dihydroxy-acid dehydratase (612 aa).

D81 is a Mg(2+) binding site. C122 serves as a coordination point for [2Fe-2S] cluster. 2 residues coordinate Mg(2+): D123 and K124. Residue K124 is modified to N6-carboxylysine. C193 is a [2Fe-2S] cluster binding site. E489 is a Mg(2+) binding site. S515 serves as the catalytic Proton acceptor.

Belongs to the IlvD/Edd family. In terms of assembly, homodimer. Requires [2Fe-2S] cluster as cofactor. Mg(2+) serves as cofactor.

The enzyme catalyses (2R)-2,3-dihydroxy-3-methylbutanoate = 3-methyl-2-oxobutanoate + H2O. The catalysed reaction is (2R,3R)-2,3-dihydroxy-3-methylpentanoate = (S)-3-methyl-2-oxopentanoate + H2O. The protein operates within amino-acid biosynthesis; L-isoleucine biosynthesis; L-isoleucine from 2-oxobutanoate: step 3/4. Its pathway is amino-acid biosynthesis; L-valine biosynthesis; L-valine from pyruvate: step 3/4. Functionally, functions in the biosynthesis of branched-chain amino acids. Catalyzes the dehydration of (2R,3R)-2,3-dihydroxy-3-methylpentanoate (2,3-dihydroxy-3-methylvalerate) into 2-oxo-3-methylpentanoate (2-oxo-3-methylvalerate) and of (2R)-2,3-dihydroxy-3-methylbutanoate (2,3-dihydroxyisovalerate) into 2-oxo-3-methylbutanoate (2-oxoisovalerate), the penultimate precursor to L-isoleucine and L-valine, respectively. The sequence is that of Dihydroxy-acid dehydratase from Pseudomonas paraeruginosa (strain DSM 24068 / PA7) (Pseudomonas aeruginosa (strain PA7)).